The chain runs to 546 residues: Sulfite oxidase, mitochondrial (546 aa).

The N-terminal 80 residues, 1 to 80 (MLPRLYRSVA…YHDHRCRASQ (80 aa)), are a transit peptide targeting the mitochondrion. The 80-residue stretch at 83–162 (PRIYSKEDVR…LAEYKIGELN (80 aa)) folds into the Cytochrome b5 heme-binding domain. Heme b is bound at residue H119. S124 is subject to Phosphoserine. Heme b-binding residues include H144, Q146, and H148. The interval 166-175 (RMSPPLEASD) is hinge. A moco domain region spans residues 176–402 (PYSNDPMRHP…YSHWQRRDYK (227 aa)). Mo-molybdopterin-binding positions include 216–220 (FTRNH), C265, D323, H362, R367, and 378–380 (HVK). The segment at 403–539 (GFSPSVDWDT…RGVLSNAWHR (137 aa)) is homodimerization.

As to quaternary structure, homodimer. Requires heme b as cofactor. It depends on Mo-molybdopterin as a cofactor.

The protein localises to the mitochondrion intermembrane space. The catalysed reaction is sulfite + O2 + H2O = sulfate + H2O2. The protein operates within energy metabolism; sulfur metabolism. Its function is as follows. Catalyzes the oxidation of sulfite to sulfate, the terminal reaction in the oxidative degradation of sulfur-containing amino acids. The chain is Sulfite oxidase, mitochondrial from Rattus norvegicus (Rat).